The following is a 38-amino-acid chain: Exendin-1 (38 aa).

The O-linked (HexNAc...) serine; in Exendin-1 and Exendin-1b glycan is linked to serine 32.

This sequence belongs to the glucagon family. In terms of processing, O-linked glycan consists of Hex-HexNAc saccharide. Glycosylation may be of interest for the biological stability of exendin-1 and exendin-1b. In terms of tissue distribution, expressed by the venom gland.

The protein resides in the secreted. In terms of biological role, O-linked and free exendin-1 and exendin-1b have vasoactive intestinal peptide(VIP)/secretin-like biological activities. They interact with rat and human VIP receptors 1 (VIPR1) and 2 (VIPR2), with the highest affinity for the human VIPR2. They induce hypotension that is mediated by relaxation of cardiac smooth muscle. This is Exendin-1 from Heloderma horridum horridum (Mexican beaded lizard).